The sequence spans 246 residues: Probable transcriptional regulatory protein RD1_2018 (246 aa).

This sequence belongs to the TACO1 family.

It is found in the cytoplasm. The protein is Probable transcriptional regulatory protein RD1_2018 of Roseobacter denitrificans (strain ATCC 33942 / OCh 114) (Erythrobacter sp. (strain OCh 114)).